A 542-amino-acid chain; its full sequence is Calcium-dependent protein kinase 15 (542 aa).

The interval 1-73 (MGARASRHRQ…QAPQQAAAED (73 aa)) is disordered. Gly2 carries N-myristoyl glycine lipidation. Residues 12–21 (PDQSQSQSPS) show a composition bias toward low complexity. A compositionally biased stretch (basic residues) spans 22-40 (PHHKHHHHHQTTRAPKPKP). Residues 41–60 (KPQPPPPQQPRSQPPPPPRH) are compositionally biased toward pro residues. The span at 61-71 (QPQQAPQQAAA) shows a compositional bias: low complexity. A Protein kinase domain is found at 90–348 (YTFGRELGRG…AAEILNHPWI (259 aa)). ATP is bound by residues 96-104 (LGRGQFGVT) and Lys119. The active-site Proton acceptor is Asp214. Residues 354-384 (APDKPLDITVISRMKQFRAMNKLKKVALKVV) are autoinhibitory domain. 4 consecutive EF-hand domains span residues 391–426 (EEIVGLKEMFKSLDTDNSGTITLEELRAGLPKLGTK), 427–462 (ISESELRQLMEAADVDGNGSIDYVEFISATMHMNRL), 463–497 (EKEDHIYKAFEYFDKDHSGFITVDELEEALTKYDM), and 498–533 (GDEATIKEIIAEVDTDHDGRINYQEFVAMMKNNSPE). Residues Asp404, Asp406, Ser408, Thr410, Glu415, Asp440, Asp442, Asn444, Ser446, Glu451, Asp476, Asp478, Ser480, Glu487, Asp511, Asp513, Asp515, Arg517, and Glu522 each coordinate Ca(2+).

It belongs to the protein kinase superfamily. Ser/Thr protein kinase family. CDPK subfamily.

It localises to the membrane. The enzyme catalyses L-seryl-[protein] + ATP = O-phospho-L-seryl-[protein] + ADP + H(+). It carries out the reaction L-threonyl-[protein] + ATP = O-phospho-L-threonyl-[protein] + ADP + H(+). With respect to regulation, activated by calcium. Autophosphorylation may play an important role in the regulation of the kinase activity. Functionally, may play a role in signal transduction pathways that involve calcium as a second messenger. This is Calcium-dependent protein kinase 15 from Oryza sativa subsp. japonica (Rice).